The primary structure comprises 96 residues: Protein RnfH (96 aa).

Belongs to the UPF0125 (RnfH) family.

The polypeptide is Protein RnfH (Shigella flexneri).